Reading from the N-terminus, the 311-residue chain is Methionyl-tRNA formyltransferase (311 aa).

109–112 (SLLP) is a (6S)-5,6,7,8-tetrahydrofolate binding site.

Belongs to the Fmt family.

The catalysed reaction is L-methionyl-tRNA(fMet) + (6R)-10-formyltetrahydrofolate = N-formyl-L-methionyl-tRNA(fMet) + (6S)-5,6,7,8-tetrahydrofolate + H(+). Functionally, attaches a formyl group to the free amino group of methionyl-tRNA(fMet). The formyl group appears to play a dual role in the initiator identity of N-formylmethionyl-tRNA by promoting its recognition by IF2 and preventing the misappropriation of this tRNA by the elongation apparatus. This chain is Methionyl-tRNA formyltransferase, found in Kosmotoga olearia (strain ATCC BAA-1733 / DSM 21960 / TBF 19.5.1).